A 491-amino-acid chain; its full sequence is Glycogen synthase 1 (491 aa).

Lys15 contributes to the ADP-alpha-D-glucose binding site.

It belongs to the glycosyltransferase 1 family. Bacterial/plant glycogen synthase subfamily.

It carries out the reaction [(1-&gt;4)-alpha-D-glucosyl](n) + ADP-alpha-D-glucose = [(1-&gt;4)-alpha-D-glucosyl](n+1) + ADP + H(+). The protein operates within glycan biosynthesis; glycogen biosynthesis. Its function is as follows. Synthesizes alpha-1,4-glucan chains using ADP-glucose. The protein is Glycogen synthase 1 of Synechococcus sp. (strain JA-3-3Ab) (Cyanobacteria bacterium Yellowstone A-Prime).